Consider the following 596-residue polypeptide: Thioredoxin reductase 1, mitochondrial (596 aa).

Positions 59–87 (LTGQRGSRDSTGATGGNAPAGSGAGAPPP) are disordered. Residues 68 to 79 (STGATGGNAPAG) show a composition bias toward low complexity. FAD-binding positions include 120–126 (IGGGSAG), 143–147 (LDFVK), 159–170 (GGTCVNVGCIPK), 233–235 (GLG), 262–266 (AVGGR), Ser-282, Phe-286, and Tyr-302. A disulfide bridge connects residues Cys-162 and Cys-167. NADP(+)-binding positions include 322–328 (VRSIVLR) and Pro-355. Residues 392–399 (RKGLVDDL), 429–432 (VGDI), 438–443 (ELTPVA), and Phe-472 contribute to the FAD site. The active-site Proton acceptor is the His-569. Pro-570 contributes to the FAD binding site. A disulfide bridge connects residues Cys-594 and Cys-595.

The protein belongs to the class-I pyridine nucleotide-disulfide oxidoreductase family. In terms of assembly, homodimer. It depends on FAD as a cofactor. As to expression, during embryogenesis, expression is seen in germ cell progenitors, developing midgut, hindgut and proventriculus.

The protein localises to the mitochondrion. Its subcellular location is the cytoplasm. The catalysed reaction is [thioredoxin]-dithiol + NADP(+) = [thioredoxin]-disulfide + NADPH + H(+). In terms of biological role, thioredoxin system is a major player in glutathione metabolism, due to the demonstrated absence of a glutathione reductase. Functionally interacts with the Sod/Cat reactive oxidation species (ROS) defense system and thereby has a role in preadult development and life span. Lack of a glutathione reductase suggests antioxidant defense in Drosophila, and probably in related insects, differs fundamentally from that in other organisms. In Drosophila melanogaster (Fruit fly), this protein is Thioredoxin reductase 1, mitochondrial.